A 154-amino-acid polypeptide reads, in one-letter code: MKIRVYCISKPEKDAYAELGEHFKKLARSFNVELEILDIFNKQIAQAQKAANEAESSLAYKEALQRYLSGAHNIALTPEGKLYDSHAFSQIFHHKQEVNFFIGGAYGFEPGFLKSCHQSLSLSPLTLGHKVAKVVLCEQIYRGLTIMHNHPYHK.

S-adenosyl-L-methionine contacts are provided by residues L76, G103, and L122–L127.

This sequence belongs to the RNA methyltransferase RlmH family. As to quaternary structure, homodimer.

It is found in the cytoplasm. It catalyses the reaction pseudouridine(1915) in 23S rRNA + S-adenosyl-L-methionine = N(3)-methylpseudouridine(1915) in 23S rRNA + S-adenosyl-L-homocysteine + H(+). Functionally, specifically methylates the pseudouridine at position 1915 (m3Psi1915) in 23S rRNA. The chain is Ribosomal RNA large subunit methyltransferase H from Wolinella succinogenes (strain ATCC 29543 / DSM 1740 / CCUG 13145 / JCM 31913 / LMG 7466 / NCTC 11488 / FDC 602W) (Vibrio succinogenes).